The chain runs to 575 residues: Chaperonin 60 subunit alpha 2, chloroplastic (575 aa).

Residues 1 to 18 (MFAVSPSSFSPTTISPRR) show a composition bias toward low complexity. Residues 1–27 (MFAVSPSSFSPTTISPRRSGQRNEPRK) form a disordered region. The transit peptide at 1 to 32 (MFAVSPSSFSPTTISPRRSGQRNEPRKFSVVR) directs the protein to the chloroplast.

Belongs to the chaperonin (HSP60) family. Part of the Cpn60 complex composed of 7 alpha and 7 beta subunits.

The protein resides in the plastid. It is found in the chloroplast. In terms of biological role, involved in protein assisted folding. The sequence is that of Chaperonin 60 subunit alpha 2, chloroplastic (CPN60A2) from Arabidopsis thaliana (Mouse-ear cress).